A 358-amino-acid polypeptide reads, in one-letter code: Chorismate synthase (358 aa).

Residue Arg48 participates in NADP(+) binding. FMN-binding positions include Arg125–Ser127, Ser277, Lys292–Ser296, and Arg318.

This sequence belongs to the chorismate synthase family. As to quaternary structure, homotetramer. FMNH2 serves as cofactor.

The enzyme catalyses 5-O-(1-carboxyvinyl)-3-phosphoshikimate = chorismate + phosphate. It functions in the pathway metabolic intermediate biosynthesis; chorismate biosynthesis; chorismate from D-erythrose 4-phosphate and phosphoenolpyruvate: step 7/7. Functionally, catalyzes the anti-1,4-elimination of the C-3 phosphate and the C-6 proR hydrogen from 5-enolpyruvylshikimate-3-phosphate (EPSP) to yield chorismate, which is the branch point compound that serves as the starting substrate for the three terminal pathways of aromatic amino acid biosynthesis. This reaction introduces a second double bond into the aromatic ring system. The sequence is that of Chorismate synthase from Desulfatibacillum aliphaticivorans.